The primary structure comprises 512 residues: Rab11 family-interacting protein 2 (512 aa).

Positions 1–120 (MMLSEQAQKW…DKQRRKTEWF (120 aa)) constitute a C2 domain. Residues 15–102 (VQVTVLQAKD…GLDKFLGQVA (88 aa)) form a necessary for its cellular translocation to the plasma membrane region. 2 disordered regions span residues 169–239 (DKMK…MSSE) and 262–285 (VPES…KMNQ). The span at 178–188 (GTFSDTSSAII) shows a compositional bias: polar residues. The segment covering 226–236 (HSMSDLSGSHM) has biased composition (low complexity). At Ser227 the chain carries Phosphoserine; by MARK2. A Phosphoserine modification is found at Ser277. The NPF 1 motif lies at 323–325 (NPF). Basic and acidic residues predominate over residues 361–374 (ERVTGKKDSRRSDK). The interval 361-392 (ERVTGKKDSRRSDKLNNGGSDSPCDLKSPNAF) is disordered. Short sequence motifs (NPF) lie at residues 406–408 (NPF) and 440–442 (NPF). The 63-residue stretch at 437-499 (PDSNPFDATA…EETPSILRVP (63 aa)) folds into the FIP-RBD domain. A necessary for interaction with AP2A1, RAB11A, subcellular location, endocytosis activity and homooligomerization region spans residues 465-512 (ELLRRKDTHIRELEDYIDNLLVRVMEETPSILRVPYEPSRKAGKFSNS).

As to quaternary structure, homooligomerizes in a Rab11-independent manner. Forms a heterooligomeric complex with RAB11FIP4. Interacts with AP2A1, MYO5B, RAB25 and REPS1. Interacts with RAB11A and RAB11B (activated GTP-bound form). Interacts with NPC1L1. Interacts (via NPF motifs) with EHD1 and EHD3. Interacts with TICAM2; this interaction directs RAB11FIP2 to the phagosome. Interacts with RAB14 and RAB25 (GTP-bound forms). Post-translationally, phosphorylation at Ser-227 by MARK2 regulates epithelial cell polarity.

The protein resides in the cell projection. The protein localises to the phagocytic cup. It is found in the cell membrane. Its subcellular location is the recycling endosome membrane. A Rab11 effector binding preferentially phosphatidylinositol 3,4,5-trisphosphate (PtdInsP3) and phosphatidic acid (PA) and acting in the regulation of the transport of vesicles from the endosomal recycling compartment (ERC) to the plasma membrane. Involved in insulin granule exocytosis. Also involved in receptor-mediated endocytosis and membrane trafficking of recycling endosomes, probably originating from clathrin-coated vesicles. Required in a complex with MYO5B and RAB11 for the transport of NPC1L1 to the plasma membrane. Also acts as a regulator of cell polarity. Plays an essential role in phagocytosis through a mechanism involving TICAM2, RAC1 and CDC42 Rho GTPases for controlling actin-dynamics. The sequence is that of Rab11 family-interacting protein 2 (RAB11FIP2) from Homo sapiens (Human).